The chain runs to 540 residues: MAAKDVKFGNDARVKMLRGVNVLADAVKVTLGPKGRNVVLDKSFGAPTITKDGVSVAREIELEDKFENMGAQMVKEVASKANDAAGDGTTTATVLAQSIITEGLKAVAAGMNPMDLKRGIDKAVVAAVEELKKLSVPCSDSKAIAQVGTISANSDETVGKLIAEAMEKVGKEGVITVEEGTGLQDELDVVEGMQFDRGYLSPYFINKPETGSVELESPFILLADKKISNIRELLPVLEAVAKAGKPLLIVAEDVEGEALATLVVNTMRGIVKVAAVKAPGFGDRRKAMLQDIATLTAGTVISEEIGLELEKATLEDLGQAKRVVINKDTTIIIDGVGDEATIQGRVTQIRQQIEEATSDYDREKLQERVAKLAGGVAVIKVGAATEVEMKEKKARVEDALHATRAAVEEGVVAGGGVALIRVAGKIAGLKGDNEDQNVGIKVALRAMESPLRQIVINAGEEASVIANNVKAGEGSYGYNAYSEEYGDMIAMGILDPTKVTRSALQYAASVAGLMITTECMVTDLPKADAPDLXGAGGMGG.

Residues 30-33 (TLGP), Lys51, 87-91 (DGTTT), Gly415, and Asp495 contribute to the ATP site.

The protein belongs to the chaperonin (HSP60) family. Forms a cylinder of 14 subunits composed of two heptameric rings stacked back-to-back. Interacts with the co-chaperonin GroES.

It is found in the cytoplasm. The catalysed reaction is ATP + H2O + a folded polypeptide = ADP + phosphate + an unfolded polypeptide.. In terms of biological role, together with its co-chaperonin GroES, plays an essential role in assisting protein folding. The GroEL-GroES system forms a nano-cage that allows encapsulation of the non-native substrate proteins and provides a physical environment optimized to promote and accelerate protein folding. This chain is Chaperonin GroEL, found in Serratia ficaria.